Here is a 422-residue protein sequence, read N- to C-terminus: MYDFVIIGGGIIGMSTAMQLIDVYPDARIALLEKESAPACHQTGHNSGVIHAGVYYTPGSLKARFCLAGNLATKTFCDQNNIRYDTCGKMLVATSELEMARMRALWERTAANGLEREWLSAAELREREPNIIGLGGIFVPSSGIVSYRDVATAMANRFQAKGGEIIYHAEVSALTEHAAGVVIRTSQGREIETATLIGCAGLMADRLVKMLGVEPGFIICPFRGEYFRLAPRHNRIVNHLIYPIPDPAMPFLGVHLTRMIDGSVTVGPNAVLALKREGYRKRDVSFTDTLEVFRSAGIRRVLKNHLLSGLGEMKNSLCKSGYLRRVQKYCPSLTVNDLQPWPAGVRAQAVSPDGKLIDDFLFVATPRSIHTCNAPSPAATSAIPIGAHIVSKVQALRESQSNPGRTLRAARNVDTLHAAFTR.

The protein belongs to the L2HGDH family. The cofactor is FAD.

The protein localises to the cell inner membrane. It catalyses the reaction (S)-2-hydroxyglutarate + a quinone = a quinol + 2-oxoglutarate. It functions in the pathway amino-acid degradation. In terms of biological role, catalyzes the dehydrogenation of L-2-hydroxyglutarate (L2HG) to alpha-ketoglutarate and couples to the respiratory chain by feeding electrons from the reaction into the membrane quinone pool. Functions in a L-lysine degradation pathway that proceeds via cadaverine, glutarate and L-2-hydroxyglutarate. Also displays some oxidase activity in vitro on L-2-hydroxyglutarate with O2 as the electron acceptor, but this activity is most likely not physiological. This Salmonella houtenae protein is L-2-hydroxyglutarate dehydrogenase.